Consider the following 1112-residue polypeptide: Patronin (microtubule-binding protein) homolog (1112 aa).

The region spanning 165 to 286 (IDSVDALLFW…VNAFLADLFV (122 aa)) is the Calponin-homology (CH) domain. Disordered regions lie at residues 324-358 (AARS…SRMS), 485-504 (EGED…QPSV), 542-566 (MQQQ…PSQL), and 788-834 (NHSE…GSGE). Polar residues-rich tracts occupy residues 345 to 358 (SHSQ…SRMS) and 489 to 504 (GTQS…QPSV). The span at 542–557 (MQQQMQQQQQQQAQAQ) shows a compositional bias: low complexity. A compositionally biased stretch (basic and acidic residues) spans 802–816 (QNDRDDLSTGRKSDD). Residues 850-914 (ALIAKTMKRK…YKRKKLEKEL (65 aa)) adopt a coiled-coil conformation. Residues 916-965 (AELSARSTGRGHSQPPFIRTKSQMSEVTESSRQNTPRMRGQSSVEQRVSV) form a disordered region. Over residues 935-951 (TKSQMSEVTESSRQNTP) the composition is skewed to polar residues. Low complexity predominate over residues 956 to 965 (QSSVEQRVSV). Residues 972 to 1109 (THKLYAKTVT…RIPHSGTPAH (138 aa)) enclose the CKK domain.

This sequence belongs to the CAMSAP1 family. Interacts with dapk-1. As to expression, expressed in larval and adult epidermis, intestine and pharynx. Broadly expressed in the nervous system. Expressed in body wall muscle cells.

Its subcellular location is the cell projection. The protein resides in the axon. The protein localises to the dendrite. It is found in the cell membrane. It localises to the sarcolemma. Its subcellular location is the cytoplasm. The protein resides in the cytosol. The protein localises to the cytoskeleton. It is found in the perikaryon. Required for microtubule stability and anchorage by binding to the minus ends of microtubules. Acts redundantly with noca-1 to control circumferential microtubule assembly along the body which is necessary for larval development, viability, morphology and integrity of the epidermis. Promotes microtubule stability and polymerization in neurons. Involved in the maintenance of neurite morphology in ALM and PLM neurons. May play a role in synaptic protein localization in the PLM neuron. May act upstream of dlk-1 in neuronal regeneration. Plays a role in postembryonic epidermal tissue integrity and wound healing. The polypeptide is Patronin (microtubule-binding protein) homolog (Caenorhabditis elegans).